Consider the following 231-residue polypeptide: Lipoprotein-releasing system ATP-binding protein LolD (231 aa).

In terms of domain architecture, ABC transporter spans 6–231; that stretch reads LQVQAVSKSY…YLQAVAEHAQ (226 aa). An ATP-binding site is contributed by 42–49; that stretch reads GTSGSGKS.

Belongs to the ABC transporter superfamily. Lipoprotein translocase (TC 3.A.1.125) family. The complex is composed of two ATP-binding proteins (LolD) and two transmembrane proteins (LolC and LolE).

It localises to the cell inner membrane. Its function is as follows. Part of the ABC transporter complex LolCDE involved in the translocation of mature outer membrane-directed lipoproteins, from the inner membrane to the periplasmic chaperone, LolA. Responsible for the formation of the LolA-lipoprotein complex in an ATP-dependent manner. This is Lipoprotein-releasing system ATP-binding protein LolD from Shewanella sp. (strain MR-7).